A 963-amino-acid chain; its full sequence is Importin-13 (963 aa).

HEAT repeat units lie at residues 24 to 54, 56 to 88, 95 to 135, 142 to 179, 194 to 231, 236 to 268, 276 to 325, 330 to 372, 375 to 438, 440 to 476, 487 to 522, 524 to 558, 562 to 600, 603 to 648, 676 to 716, 720 to 754, 761 to 803, 815 to 845, 860 to 893, and 897 to 931; these read ESVE…QAQV, PQAW…KTSR, TDQY…LSMM, AVAD…EFQT, LAVE…SWVQ, LQDC…NAIS, VNTL…ALLD, WQSF…DDIL, EAEK…YEML, AELL…FQSI, VVPG…WLAD, PVMI…CREC, LPPY…LLSA, VEEI…SNLF, PVVV…VKTL, FAPM…VHIF, FPPI…ALKR, VKAV…TELL, EDGR…FALN, and FSLL…QQIL. Residues 45 to 111 form the Importin N-terminal domain; that stretch reads AQKWLMQAQV…KAQLFTQITR (67 aa).

The protein belongs to the importin beta family. Interacts with UBC9, RAN, RBM8A, eIF-1A and PAX6.

It is found in the cytoplasm. It localises to the nucleus. Functions in nuclear protein import as nuclear transport receptor. Serves as receptor for nuclear localization signals (NLS) in cargo substrates. Is thought to mediate docking of the importin/substrate complex to the nuclear pore complex (NPC) through binding to nucleoporin and the complex is subsequently translocated through the pore by an energy requiring, Ran-dependent mechanism. At the nucleoplasmic side of the NPC, Ran binds to the importin, the importin/substrate complex dissociates and importin is re-exported from the nucleus to the cytoplasm where GTP hydrolysis releases Ran. The directionality of nuclear import is thought to be conferred by an asymmetric distribution of the GTP- and GDP-bound forms of Ran between the cytoplasm and nucleus. Mediates the nuclear import of UBC9, the RBM8A/MAGOH complex, PAX6 and probably other members of the paired homeobox family. Also mediates nuclear export of eIF-1A, and the cytoplasmic release of eIF-1A is triggered by the loading of import substrates onto IPO13. In Pongo abelii (Sumatran orangutan), this protein is Importin-13 (IPO13).